Reading from the N-terminus, the 660-residue chain is Acyl-coenzyme A oxidase acox-1.3 (660 aa).

FAD contacts are provided by residues 146 to 149 (YAQT), 154 to 155 (GT), and glycine 188. Substrate is bound by residues 282–285 (KIGY) and arginine 292. FAD-binding positions include arginine 317 and 337–340 (QQHR). ATP is bound by residues histidine 339, serine 389, histidine 393, and glutamine 401. Position 430 to 431 (430 to 431 (YE)) interacts with substrate. Glutamate 431 functions as the Proton acceptor in the catalytic mechanism. Glutamate 433 provides a ligand contact to FAD. ATP-binding positions include 524 to 527 (RASR) and tyrosine 572. The Microbody targeting signal signature appears at 658-660 (AKL).

It belongs to the acyl-CoA oxidase family. As to quaternary structure, forms a heterodimer with acox-1.1; the interaction may be important for the stability of acox-1.3. Requires FAD as cofactor.

The protein localises to the peroxisome. The enzyme catalyses asc-C7-CoA + O2 = asc-DeltaC7-CoA + H2O2. Its pathway is lipid metabolism; peroxisomal fatty acid beta-oxidation. With respect to regulation, activated by ATP. ATP binding leads to a conformational change that promotes FAD cofactor binding and enzyme activity. ATP binding likely occurs during acox-1.3 folding and/or dimer formation. Functionally, involved in the first step of peroxisomal beta-oxidation by catalyzing the desaturation of fatty acid-derived side chains of ascaroside pheromones, which regulates development and behavior. Specifically, shortens ascarosides with a 7-carbon side chain (asc-C7). Does not catalyze the desaturation of fatty acids or hydroxylated fatty acids. Involved in the biosynthesis of asc-C6-MK (daumone 2) and asc-delta-C9 (daumone 3) but not asc-C7 (daumone 1); daumones are pheromones produced during unfavourable growth conditions which promote entry into the dauer stage. In Caenorhabditis elegans, this protein is Acyl-coenzyme A oxidase acox-1.3.